The following is a 953-amino-acid chain: Translation initiation factor IF-2 (953 aa).

Disordered regions lie at residues 48 to 212 (SSFS…KIDF) and 279 to 367 (TKLK…FHEL). 3 stretches are compositionally biased toward basic and acidic residues: residues 80–89 (TGSEHVEKTQ), 98–111 (FKAEREARAKEQAA), and 140–188 (QGDK…ENHK). 2 stretches are compositionally biased toward polar residues: residues 191–207 (RFTNQKKQGRQEPQSKS) and 282–291 (KSSNISAKST). A compositionally biased stretch (basic and acidic residues) spans 300–317 (ARPEKNRELTHHSQEGQK). Positions 322 to 338 (SWNSQNQVRNQKNSNWN) are enriched in low complexity. Basic residues predominate over residues 339-348 (KNKKTKKGKN). Residues 454 to 623 (ERAPVVTIMG…LLVAEVEELK (170 aa)) enclose the tr-type G domain. The interval 463 to 470 (GHVDHGKT) is G1. Residue 463-470 (GHVDHGKT) participates in GTP binding. The segment at 488-492 (GITQH) is G2. The segment at 509–512 (DTPG) is G3. Residues 509–513 (DTPGH) and 563–566 (NKID) contribute to the GTP site. The G4 stretch occupies residues 563-566 (NKID). Residues 599-601 (SAK) are G5.

This sequence belongs to the TRAFAC class translation factor GTPase superfamily. Classic translation factor GTPase family. IF-2 subfamily.

It localises to the cytoplasm. Its function is as follows. One of the essential components for the initiation of protein synthesis. Protects formylmethionyl-tRNA from spontaneous hydrolysis and promotes its binding to the 30S ribosomal subunits. Also involved in the hydrolysis of GTP during the formation of the 70S ribosomal complex. This is Translation initiation factor IF-2 from Streptococcus pyogenes serotype M3 (strain ATCC BAA-595 / MGAS315).